The chain runs to 185 residues: Lipopolysaccharide export system protein LptA (185 aa).

The signal sequence occupies residues 1–27 (MKFKTNKLSLNLVLASSLLAASIPAFA). The segment at 166–185 (PSQLQDKNNKGQTPAQKKGN) is disordered.

The protein belongs to the LptA family. In terms of assembly, component of the lipopolysaccharide transport and assembly complex.

It localises to the periplasm. Involved in the assembly of lipopolysaccharide (LPS). Required for the translocation of LPS from the inner membrane to the outer membrane. May form a bridge between the inner membrane and the outer membrane, via interactions with LptC and LptD, thereby facilitating LPS transfer across the periplasm. The sequence is that of Lipopolysaccharide export system protein LptA from Escherichia coli O157:H7.